The following is a 37-amino-acid chain: Large ribosomal subunit protein bL36 (37 aa).

This sequence belongs to the bacterial ribosomal protein bL36 family.

This chain is Large ribosomal subunit protein bL36, found in Syntrophotalea carbinolica (strain DSM 2380 / NBRC 103641 / GraBd1) (Pelobacter carbinolicus).